Reading from the N-terminus, the 3015-residue chain is Genome polyprotein (3015 aa).

At serine 2 the chain carries N-acetylserine; by host. An interaction with STAT1 region spans residues 2 to 23; that stretch reads STLPKPQRKTKRNTNRRPMDVK. The interaction with EIF2AK2/PKR stretch occupies residues 2 to 58; that stretch reads STLPKPQRKTKRNTNRRPMDVKFPGGGQIVGGVYLLPRRGPRLGVRATRKTSERSQP. The tract at residues 2 to 59 is interaction with DDX3X; that stretch reads STLPKPQRKTKRNTNRRPMDVKFPGGGQIVGGVYLLPRRGPRLGVRATRKTSERSQPR. A disordered region spans residues 2–75; it reads STLPKPQRKT…PKARQPIGRS (74 aa). Residues 2–168 are Cytoplasmic-facing; sequence STLPKPQRKT…EDGVNYATGN (167 aa). Short sequence motifs (nuclear localization signal) lie at residues 5–13 and 38–43; these read PKPQRKTKR and PRRGPR. The span at 7–16 shows a compositional bias: basic residues; the sequence is PQRKTKRNTN. The span at 32–47 shows a compositional bias: low complexity; that stretch reads GGVYLLPRRGPRLGVR. Serine 53 is subject to Phosphoserine; by host. 2 consecutive short sequence motifs (nuclear localization signal) follow at residues 58–64 and 66–71; these read PRGRRQP and PKARQP. A phosphoserine; by host mark is found at serine 99 and serine 116. Residues 112-152 form an important for endoplasmic reticulum and mitochondrial localization region; the sequence is PRRRSRNLGKVIDTLTCGLADLMGYIPVLGGPLGGVAAALA. The interval 122-173 is interaction with APOA2; that stretch reads VIDTLTCGLADLMGYIPVLGGPLGGVAAALAHGVRAIEDGVNYATGNLPGCS. Positions 164–167 are important for lipid droplets localization; sequence YATG. The helical transmembrane segment at 169–189 threads the bilayer; it reads LPGCSFSIFLLALLSCLTTPA. A propeptide spans 178–191 (ER anchor for the core protein, removed in mature form by host signal peptidase); that stretch reads LLALLSCLTTPASA. The Lumenal segment spans residues 190-358; sequence SAIQVRNASG…TGAHWGVLGA (169 aa). N-linked (GlcNAc...) asparagine; by host glycans are attached at residues asparagine 196, asparagine 209, asparagine 234, and asparagine 250. The interval 265 to 296 is important for fusion; the sequence is LVGAAAFCSAMYIGDLCGSVFLVGQLFTFRPK. The N-linked (GlcNAc...) asparagine; by host glycan is linked to asparagine 305. Residues 359 to 379 traverse the membrane as a helical segment; it reads LLYFSMVANWAKVIAVLFLFA. Residues 380–726 lie on the Lumenal side of the membrane; it reads GADATTYTGS…WEYVVLAFLV (347 aa). The interval 385–411 is HVR1; the sequence is TYTGSAVSSTTGAFVSLFSPGPTQNLQ. Asparagine 416, asparagine 422, and asparagine 429 each carry an N-linked (GlcNAc...) (high mannose) asparagine; by host glycan. 4 disulfides stabilise this stretch: cysteine 428-cysteine 552, cysteine 451-cysteine 458, cysteine 486-cysteine 494, and cysteine 503-cysteine 508. N-linked (GlcNAc...) asparagine; by host glycosylation occurs at asparagine 447. The HVR2 stretch occupies residues 474 to 478; it reads VNISG. A glycan (N-linked (GlcNAc...) asparagine; by host) is linked at asparagine 475. The segment at 480-493 is CD81-binding 1; the sequence is SEDKPYCWHYAPRP. Asparagine 532 carries N-linked (GlcNAc...) asparagine; by host glycosylation. A CD81-binding 2 region spans residues 544–551; the sequence is PPLGAWFG. A glycan (N-linked (GlcNAc...) asparagine; by host) is linked at asparagine 556. 4 disulfides stabilise this stretch: cysteine 564–cysteine 569, cysteine 582–cysteine 586, cysteine 598–cysteine 621, and cysteine 608–cysteine 645. N-linked (GlcNAc...) (high mannose) asparagine; by host glycosylation is found at asparagine 624 and asparagine 646. An intrachain disulfide couples cysteine 653 to cysteine 678. Positions 661–672 are PKR/eIF2-alpha phosphorylation homology domain (PePHD); it reads FEMSPLLFSTTQ. The chain crosses the membrane as a helical span at residues 727 to 747; it reads LADARVCACLWLMFLVGQAEA. At 748–758 the chain is on the lumenal side; sequence ALENVIVLNAA. A helical membrane pass occupies residues 759–779; the sequence is SAASCQGLLWGLIFICCAWHV. Topologically, residues 780–783 are cytoplasmic; it reads RGRA. Residues 784–804 form a helical membrane-spanning segment; it reads VPVTTYALLQLWPLLLLILAL. Residues 805 to 814 are Lumenal-facing; that stretch reads PRRAYAFDSE. The helical transmembrane segment at 815-835 threads the bilayer; it reads QAASAGLLVLGLITIFTLTPA. The Cytoplasmic portion of the chain corresponds to 836 to 882; that stretch reads YKQLLISMLWWIQYFIALTEAQLHQWVPSLLVRGGRDAVILLACLFH. Residues 883–903 traverse the membrane as a helical segment; it reads PQLGFEVTKILLALLGPLYLL. Residues 904-929 lie on the Lumenal side of the membrane; the sequence is QYSLLKTPYFVRAHILLRACMFFRGM. A Peptidase C18 domain is found at 904–1027; it reads QYSLLKTPYF…DVKGKGWRLL (124 aa). The protease NS2-3 stretch occupies residues 905–1207; it reads YSLLKTPYFV…PVESMQSSQR (303 aa). Cysteine 923 carries S-palmitoyl cysteine; by host lipidation. The chain crosses the membrane as a helical span at residues 930–950; the sequence is ARGRYAQAILLRIGAWTGTYI. The interaction with host SCPS1 stretch occupies residues 930-950; the sequence is ARGRYAQAILLRIGAWTGTYI. Over 951-1658 the chain is Cytoplasmic; that stretch reads YDHLAPLSDW…CMSADLEVIT (708 aa). Active-site for protease NS2 activity; shared with dimeric partner residues include histidine 953, glutamate 973, and cysteine 994. The Peptidase S29 domain maps to 1028-1209; the sequence is APITAYAQQT…ESMQSSQRSP (182 aa). The Charge relay system; for serine protease NS3 activity role is filled by aspartate 1108. Cysteine 1124 and cysteine 1126 together coordinate Zn(2+). Catalysis depends on serine 1166, which acts as the Charge relay system; for serine protease NS3 activity. 2 residues coordinate Zn(2+): cysteine 1172 and histidine 1176. A Helicase ATP-binding domain is found at 1218–1370; it reads PAVPQTYQVG…PNITESALPT (153 aa). 1231–1238 is an ATP binding site; that stretch reads APTGSGKS. Mg(2+) contacts are provided by serine 1238 and glutamate 1318. A DECH box motif is present at residues 1317 to 1320; sequence DECH. The segment at 1487–1499 is RNA-binding; sequence QRRGRTGRGKHGV. A helical transmembrane segment spans residues 1659-1679; sequence STWVLVGGVVAALAAYCLSVG. Residues 1680–1691 form an NS3-binding region; sequence CVVICGRISTSG. Residues 1680–1806 lie on the Cytoplasmic side of the membrane; that stretch reads CVVICGRIST…SLTSPLSTHQ (127 aa). A helical membrane pass occupies residues 1807 to 1827; that stretch reads TLLLNILGGWVASQLANPTAS. The Lumenal portion of the chain corresponds to 1828-1829; the sequence is TA. Residues 1830 to 1850 traverse the membrane as a helical segment; sequence FVVSGLAGAAVGSIGLGRVIV. A topological domain (cytoplasmic) is located at residue aspartate 1851. Residues 1852–1872 form a helical membrane-spanning segment; the sequence is VLAGYGAGVSGALVAFKIMCG. The Lumenal portion of the chain corresponds to 1873–1882; that stretch reads ETPSAEDMVN. A helical transmembrane segment spans residues 1883-1903; sequence LLPALLSPGALVVGVVCAAIL. At 1904-1973 the chain is on the cytoplasmic side; the sequence is RRHAGPSEGA…WINTDWSTPC (70 aa). A lipid anchor (S-palmitoyl cysteine; by host) is attached at cysteine 1973. Residues 1974–2003 lie within the membrane without spanning it; sequence SSSWLRDIWDWVCEVLSDFKTWLKAKLVPA. Topologically, residues 2004-2994 are cytoplasmic; that stretch reads LPGVPFLSCQ…YHSASRARPR (991 aa). Zn(2+) contacts are provided by cysteine 2012, cysteine 2030, cysteine 2032, and cysteine 2053. An FKBP8-binding region spans residues 2121–2209; it reads EFFTEVDGVR…ASSSASQLSA (89 aa). The interval 2121–2334 is transcriptional activation; that stretch reads EFFTEVDGVR…PIPPPRRKKV (214 aa). Residues 2136 to 2140 are interaction with non-structural protein 4A; it reads PRCKP. The interaction with host SKP2 stretch occupies residues 2190–2442; sequence RLARGSPPSL…ALVTPCAAEE (253 aa). Residues serine 2195, serine 2198, serine 2202, serine 2205, serine 2208, and serine 2211 each carry the phosphoserine; by host modification. The interval 2211–2250 is ISDR; that stretch reads SLKATCTMHGAHPDAELIEANLLWRQEMGGNITRVESENK. The tract at residues 2211 to 2276 is interaction with EIF2AK2/PKR; it reads SLKATCTMHG…REMSVPAECH (66 aa). The NS4B-binding stretch occupies residues 2250 to 2308; that stretch reads KVVILDSFDPLVPEFEEREMSVPAECHRPRRPKFPPALPIWATPGYNPPVLETWKSPTY. A V3 region spans residues 2301–2378; that stretch reads ETWKSPTYEP…PDHSTESSEH (78 aa). Disordered regions lie at residues 2319 to 2338 and 2352 to 2413; these read PPSG…VQLD and KTFE…SWST. An SH3-binding motif is present at residues 2324–2327; sequence PPIP. The short motif at 2329–2337 is the Nuclear localization signal element; sequence PRRKKVVQL. Residue lysine 2352 forms a Glycyl lysine isopeptide (Lys-Gly) (interchain with G-Cter in ubiquitin) linkage. Over residues 2355–2365 the composition is skewed to polar residues; sequence ETPSSPTTGYG. Over residues 2368-2383 the composition is skewed to basic and acidic residues; sequence QPDHSTESSEHDRDDG. 2 positions are modified to phosphoserine; by host: serine 2453 and serine 2466. Positions 2638–2756 constitute a RdRp catalytic domain; that stretch reads PMGFSYDTRC…VTESAGVNED (119 aa). Positions 2644, 2742, and 2743 each coordinate Mg(2+). The chain crosses the membrane as a helical span at residues 2995–3015; the sequence is FLLLCLLLLSVGVGIFLLPAR.

It belongs to the hepacivirus polyprotein family. In terms of assembly, homooligomer. Interacts with E1 (via C-terminus). Interacts with the non-structural protein 5A. Interacts (via N-terminus) with host STAT1 (via SH2 domain); this interaction results in decreased STAT1 phosphorylation and ubiquitin-mediated proteasome-dependent STAT1 degradation, leading to decreased IFN-stimulated gene transcription. Interacts with host STAT3; this interaction constitutively activates STAT3. Interacts with host LTBR receptor. Interacts with host TNFRSF1A receptor and possibly induces apoptosis. Interacts with host HNRPK. Interacts with host YWHAE. Interacts with host UBE3A/E6AP. Interacts with host DDX3X. Interacts with host APOA2. Interacts with host RXRA protein. Interacts with host SP110 isoform 3/Sp110b; this interaction sequesters the transcriptional corepressor SP110 away from the nucleus. Interacts with host CREB3 nuclear transcription protein; this interaction triggers cell transformation. Interacts with host ACY3. Interacts with host C1QR1. Interacts with host RBM24; this interaction, which enhances the interaction of the mature core protein with 5'-UTR, may inhibit viral translation and favor replication. Interacts with host EIF2AK2/PKR; this interaction induces the autophosphorylation of EIF2AK2. Part of the viral assembly initiation complex composed of NS2, E1, E2, NS3, NS4A, NS5A and the mature core protein. As to quaternary structure, forms a heterodimer with envelope glycoprotein E2. Interacts with mature core protein. Interacts with protease NS2. The heterodimer E1/E2 interacts with host CLDN1; this interaction plays a role in viral entry into host cell. Interacts with host SPSB2 (via C-terminus). Part of the viral assembly initiation complex composed of NS2, E1, E2, NS3, NS4A, NS5A and the mature core protein. Interacts with host NEURL3; this interaction prevents E1 binding to glycoprotein E2. Forms a heterodimer with envelope glycoprotein E1. Interacts with host CD81 and SCARB1 receptors; these interactions play a role in viral entry into host cell. Interacts with host EIF2AK2/PKR; this interaction inhibits EIF2AK2 and probably allows the virus to evade the innate immune response. Interacts with host CD209/DC-SIGN and CLEC4M/DC-SIGNR. Interact with host SPCS1; this interaction is essential for viral particle assembly. Interacts with protease NS2. The heterodimer E1/E2 interacts with host CLDN1; this interaction plays a role in viral entry into host cell. Part of the viral assembly initiation complex composed of NS2, E1, E2, NS3, NS4A, NS5A and the mature core protein. Interacts with host SLC3A2/4F2hc; the interaction may facilitate viral entry into host cell. Interacts with human PLSCR1. In terms of assembly, homohexamer. Homoheptamer. Interacts with protease NS2. As to quaternary structure, homodimer. Interacts with host SPCS1; this interaction is essential for viral particle assembly. Interacts with envelope glycoprotein E1. Interacts with envelope glycoprotein E2. Interacts with viroporin p7. Interacts with serine protease/helicase NS3. Part of the replication complex composed of NS2, NS3, NS4A, NS4B, NS5A and the RNA-directed RNA polymerase embedded in an ER-derived membranous web. Part of the viral assembly initiation complex composed of NS2, E1, E2, NS3, NS4A, NS5A and the mature core protein. Interacts with protease NS2. Interacts with non-structural protein 4A; this interaction stabilizes the folding of NS3 serine protease. NS3-NS4A interaction is essential for NS3 activation and allows membrane anchorage of the latter. NS3/NS4A complex also prevents phosphorylation of host IRF3, thus preventing the establishment of dsRNA induced antiviral state. Interacts with host MAVS; this interaction leads to the cleavage and inhibition of host MAVS. Interacts with host TICAM1; this interaction leads to the cleavage and inhibition of host TICAM1. Interacts with host TANK-binding kinase/TBK1; this interaction results in the inhibition of the association between TBK1 and IRF3, which leads to the inhibition of IRF3 activation. Interacts with host RBM24. Part of the replication complex composed of NS2, NS3, NS4A, NS4B, NS5A and the RNA-directed RNA polymerase embedded in an ER-derived membranous web. Part of the viral assembly initiation complex composed of NS2, E1, E2, NS3, NS4A, NS5A and the mature core protein. In terms of assembly, interacts with NS3 serine protease; this interaction stabilizes the folding of NS3 serine protease. NS3-NS4A interaction is essential for NS3 activation and allows membrane anchorage of the latter. Interacts with non-structural protein 5A (via N-terminus). Part of the replication complex composed of NS2, NS3, NS4A, NS4B, NS5A and the RNA-directed RNA polymerase embedded in an ER-derived membranous web. Part of the viral assembly initiation complex composed of NS2, E1, E2, NS3, NS4A, NS5A and the mature core protein. As to quaternary structure, homomultimer. Interacts with non-structural protein NS5A. Interacts with host PLA2G4C; this interaction likely initiates the recruitment of replication complexes to lipid droplets. Interacts with host STING; this interaction disrupts the interaction between STING and TBK1 thereby suppressing the interferon signaling. Part of the replication complex composed of NS2, NS3, NS4A, NS4B, NS5A and the RNA-directed RNA polymerase embedded in an ER-derived membranous web. Monomer. Homodimer; dimerization is required for RNA-binding. Interacts with the mature core protein. Interacts (via N-terminus) with non-structural protein 4A. Interacts with non-structural protein 4B. Interacts (via region D2) with RNA-directed RNA polymerase. Part of the viral assembly initiation complex composed of NS2, E1, E2, NS3, NS4A, NS5A and the mature core protein. Part of the replication complex composed of NS2, NS3, NS4A, NS4B, NS5A and the RNA-directed RNA polymerase embedded in an ER-derived membranous web. Interacts with host GRB2. Interacts with host BIN1. Interacts with host PIK3R1. Interacts with host SRCAP. Interacts with host FKBP8. Interacts (via C-terminus) with host VAPB (via MSP domain). Interacts with host EIF2AK2/PKR; this interaction leads to disruption of EIF2AK2 dimerization by NS5A and probably allows the virus to evade the innate immune response. Interacts (via N-terminus) with host PACSIN2 (via N-terminus); this interaction attenuates protein kinase C alpha-mediated phosphorylation of PACSIN2 by disrupting the interaction between PACSIN2 and PRKCA. Interacts (via N-terminus) with host SRC kinase (via SH2 domain). Interacts with most Src-family kinases. Interacts with host IFI27 and SKP2; promotes the ubiquitin-mediated proteasomal degradation of NS5A. Interacts with host GPS2. Interacts with host TNFRSF21; this interaction allows the modulation by the virus of JNK, p38 MAPK, STAT3, and Akt signaling pathways in a DR6-dependent manner. Interacts (via N-terminus) with host CIDEB (via N-terminus); this interaction seems to regulate the association of HCV particles with APOE. Interacts with host CHKA/Choline Kinase-alpha; CHKA bridges host PI4KA and NS5A and potentiates NS5A-stimulated PI4KA activity, which then facilitates the targeting of the ternary complex to the ER for viral replication. Interacts with host SPSB2 (via C-terminus); this interaction targets NS5A for ubiquitination and degradation. Interacts with host RAB18; this interaction may promote the association of NS5A and other replicase components with lipid droplets. Interacts (via region D2) with host PPIA/CYPA; the interaction stimulates RNA-binding ability of NS5A and is dependent on the peptidyl-prolyl cis-trans isomerase activity of PPIA/CYPA. Interacts with host TRIM14; this interaction induces the degradation of NS5A. In terms of assembly, homooligomer. Interacts with non-structural protein 5A. Interacts with host VAPB. Interacts with host PRK2/PKN2. Interacts with host HNRNPA1 and SEPT6; these interactions facilitate viral replication. Part of the replication complex composed of NS2, NS3, NS4A, NS4B, NS5A and the RNA-directed RNA polymerase. It depends on Zn(2+) as a cofactor. Mg(2+) is required as a cofactor. In terms of processing, specific enzymatic cleavages in vivo yield mature proteins. The structural proteins, core, E1, E2 and p7 are produced by proteolytic processing by host signal peptidases. The core protein precursor is synthesized as a 23 kDa, which is retained in the ER membrane through the hydrophobic signal peptide. Cleavage by the signal peptidase releases the 21 kDa mature core protein. The cleavage of the core protein precursor occurs between aminoacids 176 and 188 but the exact cleavage site is not known. Some degraded forms of the core protein appear as well during the course of infection. The other proteins (p7, NS2, NS3, NS4A, NS4B, NS5A and NS5B) are cleaved by the viral proteases. Autoprocessing between NS2 and NS3 is mediated by the NS2 cysteine protease catalytic domain and regulated by the NS3 N-terminal domain. Phosphorylated by host PKC and PKA. Post-translationally, ubiquitinated; mediated by UBE3A and leading to core protein subsequent proteasomal degradation. In terms of processing, highly N-glycosylated. Palmitoylation is required for NS2/3 autoprocessing and E2 recruitment to membranes. Post-translationally, palmitoylated. This modification may play a role in its polymerization or in protein-protein interactions. In terms of processing, phosphorylated on serines in a basal form termed p56. p58 is a hyperphosphorylated form of p56. p56 and p58 coexist in the cell in roughly equivalent amounts. Hyperphosphorylation is dependent on the presence of NS4A. Host CSNK1A1/CKI-alpha or RPS6KB1 kinases may be responsible for NS5A phosphorylation. Tyrosine phosphorylation is essential for the interaction with host SRC. Post-translationally, ubiquitinated. Ubiquitination, most probably at Lys-2352, mediated by host IFI27 and SKP2 leads to proteasomal degradation, restricting viral infection. Ubiquitination by host TRIM22 leads to interruption of viral replication. In terms of processing, the N-terminus is phosphorylated by host PRK2/PKN2.

The protein localises to the host endoplasmic reticulum membrane. It is found in the host mitochondrion membrane. Its subcellular location is the virion. The protein resides in the host cytoplasm. It localises to the host nucleus. The protein localises to the host lipid droplet. It is found in the virion membrane. Its subcellular location is the host mitochondrion. The protein resides in the host cell membrane. It localises to the host perinuclear region. The catalysed reaction is Hydrolysis of four peptide bonds in the viral precursor polyprotein, commonly with Asp or Glu in the P6 position, Cys or Thr in P1 and Ser or Ala in P1'.. It carries out the reaction a ribonucleoside 5'-triphosphate + H2O = a ribonucleoside 5'-diphosphate + phosphate + H(+). The enzyme catalyses ATP + H2O = ADP + phosphate + H(+). It catalyses the reaction RNA(n) + a ribonucleoside 5'-triphosphate = RNA(n+1) + diphosphate. Its activity is regulated as follows. Inhibited by the antiviral drug hexamethylene amiloride. Inhibition by amantadine appears to be genotype-dependent. Also inhibited by long-alkyl-chain iminosugar derivatives. Activity is up-regulated by PRK2/PKN2-mediated phosphorylation. Functionally, packages viral RNA to form a viral nucleocapsid, and promotes virion budding. Participates in the viral particle production as a result of its interaction with the non-structural protein 5A. Binds RNA and may function as a RNA chaperone to induce the RNA structural rearrangements taking place during virus replication. Modulates viral translation initiation by interacting with viral IRES and 40S ribosomal subunit. Affects various cell signaling pathways, host immunity and lipid metabolism. Prevents the establishment of cellular antiviral state by blocking the interferon-alpha/beta (IFN-alpha/beta) and IFN-gamma signaling pathways and by blocking the formation of phosphorylated STAT1 and promoting ubiquitin-mediated proteasome-dependent degradation of STAT1. Activates STAT3 leading to cellular transformation. Regulates the activity of cellular genes, including c-myc and c-fos. May repress the promoter of p53, and sequester CREB3 and SP110 isoform 3/Sp110b in the cytoplasm. Represses cell cycle negative regulating factor CDKN1A, thereby interrupting an important check point of normal cell cycle regulation. Targets transcription factors involved in the regulation of inflammatory responses and in the immune response: suppresses TNF-induced NF-kappa-B activation, and activates AP-1. Binds to dendritic cells (DCs) via C1QR1, resulting in down-regulation of T-lymphocytes proliferation. Alters lipid metabolism by interacting with hepatocellular proteins involved in lipid accumulation and storage. Induces up-regulation of FAS promoter activity, and thereby contributes to the increased triglyceride accumulation in hepatocytes (steatosis). Forms a heterodimer with envelope glycoprotein E2, which mediates virus attachment to the host cell, virion internalization through clathrin-dependent endocytosis and fusion with host membrane. Fusion with the host cell is most likely mediated by both E1 and E2, through conformational rearrangements of the heterodimer required for fusion rather than a classical class II fusion mechanism. E1/E2 heterodimer binds host apolipoproteins such as APOB and ApoE thereby forming a lipo-viro-particle (LVP). APOE associated to the LVP allows the initial virus attachment to cell surface receptors such as the heparan sulfate proteoglycans (HSPGs), syndecan-1 (SDC1), syndecan-1 (SDC2), the low-density lipoprotein receptor (LDLR) and scavenger receptor class B type I (SCARB1). The cholesterol transfer activity of SCARB1 allows E2 exposure and binding of E2 to SCARB1 and the tetraspanin CD81. E1/E2 heterodimer binding on CD81 activates the epithelial growth factor receptor (EGFR) signaling pathway. Diffusion of the complex E1-E2-EGFR-SCARB1-CD81 to the cell lateral membrane allows further interaction with Claudin 1 (CLDN1) and occludin (OCLN) to finally trigger HCV entry. Its function is as follows. Forms a heterodimer with envelope glycoprotein E1, which mediates virus attachment to the host cell, virion internalization through clathrin-dependent endocytosis and fusion with host membrane. Fusion with the host cell is most likely mediated by both E1 and E2, through conformational rearrangements of the heterodimer required for fusion rather than a classical class II fusion mechanism. The interaction between envelope glycoprotein E2 and host apolipoprotein E/APOE allows the proper assembly, maturation and infectivity of the viral particles. This interaction is probably promoted via the up-regulation of cellular autophagy by the virus. E1/E2 heterodimer binds host apolipoproteins such as APOB and APOE thereby forming a lipo-viro-particle (LVP). APOE associated to the LVP allows the initial virus attachment to cell surface receptors such as the heparan sulfate proteoglycans (HSPGs), syndecan-1 (SDC1), syndecan-1 (SDC2), the low-density lipoprotein receptor (LDLR) and scavenger receptor class B type I (SCARB1). The cholesterol transfer activity of SCARB1 allows E2 exposure and binding of E2 to SCARB1 and the tetraspanin CD81. E1/E2 heterodimer binding on CD81 activates the epithelial growth factor receptor (EGFR) signaling pathway. Diffusion of the complex E1-E2-EGFR-SCARB1-CD81 to the cell lateral membrane allows further interaction with Claudin 1 (CLDN1) and occludin (OCLN) to finally trigger HCV entry. Inhibits host EIF2AK2/PKR activation, preventing the establishment of an antiviral state. Viral ligand for CD209/DC-SIGN and CLEC4M/DC-SIGNR, which are respectively found on dendritic cells (DCs), and on liver sinusoidal endothelial cells and macrophage-like cells of lymph node sinuses. These interactions allow the capture of circulating HCV particles by these cells and subsequent facilitated transmission to permissive cells such as hepatocytes and lymphocyte subpopulations. The interaction between E2 and host amino acid transporter complex formed by SLC3A2 and SLC7A5/LAT1 may facilitate viral entry into host cell. In terms of biological role, ion channel protein that acts as a viroporin and plays an essential role in the assembly, envelopment and secretion of viral particles. Regulates the host cell secretory pathway, which induces the intracellular retention of viral glycoproteins and favors assembly of viral particles. Creates a pore in acidic organelles and releases Ca(2+) and H(+) in the cytoplasm of infected cells, leading to a productive viral infection. High levels of cytoplasmic Ca(2+) may trigger membrane trafficking and transport of viral ER-associated proteins to viroplasms, sites of viral genome replication. This ionic imbalance induces the assembly of the inflammasome complex, which triggers the maturation of pro-IL-1beta into IL-1beta through the action of caspase-1. Targets also host mitochondria and induces mitochondrial depolarization. In addition of its role as a viroporin, acts as a lipid raft adhesion factor. Functionally, cysteine protease required for the proteolytic auto-cleavage between the non-structural proteins NS2 and NS3. The N-terminus of NS3 is required for the function of NS2 protease (active region NS2-3). Promotes the initiation of viral particle assembly by mediating the interaction between structural and non-structural proteins. Displays three enzymatic activities: serine protease with a chymotrypsin-like fold, NTPase and RNA helicase. NS3 serine protease, in association with NS4A, is responsible for the cleavages of NS3-NS4A, NS4A-NS4B, NS4B-NS5A and NS5A-NS5B. The NS3/NS4A complex prevents phosphorylation of host IRF3, thus preventing the establishment of dsRNA induced antiviral state. The NS3/NS4A complex induces host amino acid transporter component SLC3A2, thus contributing to HCV propagation. NS3 RNA helicase binds to RNA and unwinds both dsDNA and dsRNA in the 3' to 5' direction, and likely resolves RNA complicated stable secondary structures in the template strand. Binds a single ATP and catalyzes the unzipping of a single base pair of dsRNA. Inhibits host antiviral proteins TBK1 and IRF3 thereby preventing the establishment of an antiviral state. Cleaves host MAVS/CARDIF thereby preventing the establishment of an antiviral state. Cleaves host TICAM1/TRIF, thereby disrupting TLR3 signaling and preventing the establishment of an antiviral state. Its function is as follows. Peptide cofactor which forms a non-covalent complex with the N-terminal of NS3 serine protease. The NS3/NS4A complex prevents phosphorylation of host IRF3, thus preventing the establishment of dsRNA induced antiviral state. The NS3/NS4A complex induces host amino acid transporter component SLC3A2, thus contributing to HCV propagation. In terms of biological role, induces a specific membrane alteration that serves as a scaffold for the virus replication complex. This membrane alteration gives rise to the so-called ER-derived membranous web that contains the replication complex. NS4B self-interaction contributes to its function in membranous web formation. Promotes host TRIF protein degradation in a CASP8-dependent manner thereby inhibiting host TLR3-mediated interferon signaling. Disrupts the interaction between STING and TBK1 contributing to the inhibition of interferon signaling. Functionally, phosphorylated protein that is indispensable for viral replication and assembly. Both hypo- and hyperphosphorylated states are required for the viral life cycle. The hyperphosphorylated form of NS5A is an inhibitor of viral replication. Involved in RNA-binding and especially in binding to the viral genome. Zinc is essential for RNA-binding. Participates in the viral particle production as a result of its interaction with the mature viral core protein. Its interaction with host VAPB may target the viral replication complex to vesicles. Down-regulates viral IRES translation initiation. Mediates interferon resistance, presumably by interacting with and inhibiting host EIF2AK2/PKR. Prevents BIN1-induced apoptosis. Acts as a transcriptional activator of some host genes important for viral replication when localized in the nucleus. Via the interaction with host PACSIN2, modulates lipid droplet formation in order to promote virion assembly. Modulates TNFRSF21/DR6 signaling pathway for viral propagation. RNA-dependent RNA polymerase that performs primer-template recognition and RNA synthesis during viral replication. Initiates RNA transcription/replication at a flavin adenine dinucleotide (FAD), resulting in a 5'- FAD cap on viral RNAs. In this way, recognition of viral 5' RNA by host pattern recognition receptors can be bypassed, thereby evading activation of antiviral pathways. The protein is Genome polyprotein of Hepatitis C virus genotype 6h (isolate VN004) (HCV).